We begin with the raw amino-acid sequence, 1175 residues long: Atrophin-1 (1175 aa).

Disordered regions lie at residues 1–595, 608–752, and 770–847; these read MKTR…VTTS, SSPA…ARFN, and VPLE…HRPP. The Nuclear localization signal signature appears at 16–32; sequence RKKEAPGPREELRSRGR. Basic and acidic residues predominate over residues 17-29; the sequence is KKEAPGPREELRS. At Ser34 the chain carries Phosphoserine. The segment covering 45-63 has biased composition (basic and acidic residues); it reads GKAEKSRQTAKKARIEEPS. 5 positions are modified to phosphoserine: Ser77, Ser79, Ser101, Ser103, and Ser107. The segment covering 108-128 has biased composition (basic and acidic residues); sequence LDGRSINDDGSSDPRDIDQDN. A compositionally biased stretch (polar residues) spans 129 to 152; that stretch reads RSTSPSIYSPGSVENDSDSSSGLS. Composition is skewed to pro residues over residues 158-174 and 208-217; these read PYHP…PPDS and GPPPGAPPTH. Low complexity-rich tracts occupy residues 240 to 253 and 262 to 273; these read GAAA…SGGK and IPISSSGASGAP. Residues 345–374 show a composition bias toward pro residues; the sequence is PPGPEKGPTLAPSPHPLPPASSSAPGPPMR. Residues 378 to 396 are compositionally biased toward low complexity; it reads SSSSSSAAASSSSSSSSAS. Residues 416–437 are compositionally biased toward polar residues; sequence SMSVSNQPPKYTQPSLPSQAVW. The span at 476 to 491 shows a compositional bias: basic residues; it reads THHHHQQQPQQQHHHG. An involved in binding BAIAP2 region spans residues 503-553; that stretch reads HPLESSNSHHAHPYNMSPSLGSLRPYPPGPAHLPPPHGQVSYNQAGPNGPP. Residues 527 to 539 are compositionally biased toward pro residues; it reads PYPPGPAHLPPPH. Over residues 547-584 the composition is skewed to low complexity; that stretch reads AGPNGPPVSSSNSSGSSSQASYSCSHPSSSQGPQGASY. Position 617 is a phosphoserine (Ser617). N6-acetyllysine is present on Lys626. Position 638 is a phosphothreonine (Thr638). A Phosphoserine modification is found at Ser646. A Phosphothreonine modification is found at Thr654. Composition is skewed to pro residues over residues 693 to 703 and 722 to 737; these read LPPPPAAPTTG and PESP…PPPK. Ser724 is subject to Phosphoserine; by MAPK8. Ser731 and Ser733 each carry phosphoserine. A compositionally biased stretch (basic and acidic residues) spans 780–824; that stretch reads KRADLVEKVRREAEQRAREEKEREREREREKEREREKERELERSV. The required for interaction with FAT1 stretch occupies residues 864–879; the sequence is DTPALRTLSEYARPHV. Position 881 is a phosphoserine (Ser881). The disordered stretch occupies residues 913–932; the sequence is PAAREREREARERDLRDRLK. Basic and acidic residues predominate over residues 914-932; sequence AAREREREARERDLRDRLK. Residues 1018 to 1026 carry the Nuclear export signal motif; sequence ALGNDPLAR. Arg1100 carries the asymmetric dimethylarginine modification. Residue Lys1168 forms a Glycyl lysine isopeptide (Lys-Gly) (interchain with G-Cter in SUMO2) linkage.

As to quaternary structure, interacts with BAIAP2, WWP1, WWP2, WWP3 and RERE. Interacts (via its N-terminus) with MTG8; the interaction enhances transcriptional repression of MTG8. Interacts with PQBP1. Interacts with NR2E1; the interaction represses the transcriptional activity of NR2E1. Interacts with FAT1 (via a C-terminal domain). In terms of processing, phosphorylated in vitro by MAPK8/JNK1 on Ser-724. In terms of tissue distribution, widely expressed. Most abundant in the brain.

It is found in the cytoplasm. Its subcellular location is the perinuclear region. It localises to the cell junction. The protein localises to the nucleus. Transcriptional corepressor. Corepressor of MTG8 transcriptional repression. Has some intrinsic repression activity which is independent of the number of the poly-Q repeats. Recruits NR2E1 to repress transcription. Promotes vascular smooth cell (VSMC) migration and orientation. The sequence is that of Atrophin-1 (Atn1) from Mus musculus (Mouse).